A 488-amino-acid chain; its full sequence is Bifunctional protein HldE (488 aa).

A ribokinase region spans residues 1 to 330 (MIDFDGLSNA…RNILPPASLA (330 aa)). An ATP-binding site is contributed by 205 to 208 (NSKE). The active site involves Asp-275. The segment at 358-488 (FTNGCFDILH…TSLVKRAGGA (131 aa)) is cytidylyltransferase.

It in the N-terminal section; belongs to the carbohydrate kinase PfkB family. This sequence in the C-terminal section; belongs to the cytidylyltransferase family. In terms of assembly, homodimer.

It catalyses the reaction D-glycero-beta-D-manno-heptose 7-phosphate + ATP = D-glycero-beta-D-manno-heptose 1,7-bisphosphate + ADP + H(+). The enzyme catalyses D-glycero-beta-D-manno-heptose 1-phosphate + ATP + H(+) = ADP-D-glycero-beta-D-manno-heptose + diphosphate. It functions in the pathway nucleotide-sugar biosynthesis; ADP-L-glycero-beta-D-manno-heptose biosynthesis; ADP-L-glycero-beta-D-manno-heptose from D-glycero-beta-D-manno-heptose 7-phosphate: step 1/4. The protein operates within nucleotide-sugar biosynthesis; ADP-L-glycero-beta-D-manno-heptose biosynthesis; ADP-L-glycero-beta-D-manno-heptose from D-glycero-beta-D-manno-heptose 7-phosphate: step 3/4. In terms of biological role, catalyzes the phosphorylation of D-glycero-D-manno-heptose 7-phosphate at the C-1 position to selectively form D-glycero-beta-D-manno-heptose-1,7-bisphosphate. Its function is as follows. Catalyzes the ADP transfer from ATP to D-glycero-beta-D-manno-heptose 1-phosphate, yielding ADP-D-glycero-beta-D-manno-heptose. The sequence is that of Bifunctional protein HldE from Nitrobacter winogradskyi (strain ATCC 25391 / DSM 10237 / CIP 104748 / NCIMB 11846 / Nb-255).